The primary structure comprises 525 residues: Cysteine--tRNA ligase (525 aa).

Cysteine 49 lines the Zn(2+) pocket. Positions 51-61 match the 'HIGH' region motif; sequence VTVYDLCHLGH. Zn(2+)-binding residues include cysteine 258, histidine 283, and glutamate 287. A 'KMSKS' region motif is present at residues 315 to 319; the sequence is KMSKS. Lysine 318 is an ATP binding site.

The protein belongs to the class-I aminoacyl-tRNA synthetase family. Monomer. It depends on Zn(2+) as a cofactor.

The protein resides in the cytoplasm. It catalyses the reaction tRNA(Cys) + L-cysteine + ATP = L-cysteinyl-tRNA(Cys) + AMP + diphosphate. The chain is Cysteine--tRNA ligase from Synechococcus sp. (strain JA-2-3B'a(2-13)) (Cyanobacteria bacterium Yellowstone B-Prime).